Consider the following 141-residue polypeptide: Auxin-responsive protein SAUR64 (141 aa).

This sequence belongs to the ARG7 family.

The protein resides in the cell membrane. Its function is as follows. May promote auxin-stimulated organ elongation, such as hypocotyls, stamen filaments and petals. The chain is Auxin-responsive protein SAUR64 from Arabidopsis thaliana (Mouse-ear cress).